Here is a 336-residue protein sequence, read N- to C-terminus: Holliday junction branch migration complex subunit RuvB (336 aa).

The tract at residues 1-183 (MATERLVAGN…FGINSRLEFY (183 aa)) is large ATPase domain (RuvB-L). ATP is bound by residues L22, R23, G64, K67, T68, T69, 130 to 132 (EDF), R173, Y183, and R220. T68 lines the Mg(2+) pocket. Residues 184–254 (QVAELEEIIR…VAREALELLQ (71 aa)) form a small ATPAse domain (RuvB-S) region. The segment at 257 to 336 (AAGLDSSDRR…LGIKPEDRLF (80 aa)) is head domain (RuvB-H). The DNA site is built by R312 and R317.

It belongs to the RuvB family. Homohexamer. Forms an RuvA(8)-RuvB(12)-Holliday junction (HJ) complex. HJ DNA is sandwiched between 2 RuvA tetramers; dsDNA enters through RuvA and exits via RuvB. An RuvB hexamer assembles on each DNA strand where it exits the tetramer. Each RuvB hexamer is contacted by two RuvA subunits (via domain III) on 2 adjacent RuvB subunits; this complex drives branch migration. In the full resolvosome a probable DNA-RuvA(4)-RuvB(12)-RuvC(2) complex forms which resolves the HJ.

The protein localises to the cytoplasm. It carries out the reaction ATP + H2O = ADP + phosphate + H(+). Its function is as follows. The RuvA-RuvB-RuvC complex processes Holliday junction (HJ) DNA during genetic recombination and DNA repair, while the RuvA-RuvB complex plays an important role in the rescue of blocked DNA replication forks via replication fork reversal (RFR). RuvA specifically binds to HJ cruciform DNA, conferring on it an open structure. The RuvB hexamer acts as an ATP-dependent pump, pulling dsDNA into and through the RuvAB complex. RuvB forms 2 homohexamers on either side of HJ DNA bound by 1 or 2 RuvA tetramers; 4 subunits per hexamer contact DNA at a time. Coordinated motions by a converter formed by DNA-disengaged RuvB subunits stimulates ATP hydrolysis and nucleotide exchange. Immobilization of the converter enables RuvB to convert the ATP-contained energy into a lever motion, pulling 2 nucleotides of DNA out of the RuvA tetramer per ATP hydrolyzed, thus driving DNA branch migration. The RuvB motors rotate together with the DNA substrate, which together with the progressing nucleotide cycle form the mechanistic basis for DNA recombination by continuous HJ branch migration. Branch migration allows RuvC to scan DNA until it finds its consensus sequence, where it cleaves and resolves cruciform DNA. This chain is Holliday junction branch migration complex subunit RuvB, found in Moorella thermoacetica (strain ATCC 39073 / JCM 9320).